Reading from the N-terminus, the 261-residue chain is Ethanolamine ammonia-lyase small subunit (261 aa).

Residues Val157, Glu178, and Cys207 each coordinate adenosylcob(III)alamin.

This sequence belongs to the EutC family. In terms of assembly, the basic unit is a heterodimer which dimerizes to form tetramers. The heterotetramers trimerize; 6 large subunits form a core ring with 6 small subunits projecting outwards. Adenosylcob(III)alamin serves as cofactor.

It is found in the bacterial microcompartment. It catalyses the reaction ethanolamine = acetaldehyde + NH4(+). Its pathway is amine and polyamine degradation; ethanolamine degradation. In terms of biological role, catalyzes the deamination of various vicinal amino-alcohols to oxo compounds. Allows this organism to utilize ethanolamine as the sole source of nitrogen and carbon in the presence of external vitamin B12. This is Ethanolamine ammonia-lyase small subunit from Rhodopseudomonas palustris (strain BisA53).